We begin with the raw amino-acid sequence, 380 residues long: Cytochrome b (380 aa).

4 helical membrane-spanning segments follow: residues 33 to 53, 77 to 98, 113 to 133, and 178 to 198; these read FGSLLGICLMVQIITGLFLAM, WLIRYMHANGASMFFICLFIHV, WNIGIALFLTTMATAFVGYVL, and FFAFHFILPFIITAFVLVHLL. The heme b site is built by H83 and H97. Heme b contacts are provided by H182 and H196. Residue H201 coordinates a ubiquinone. 4 helical membrane-spanning segments follow: residues 226–246, 288–308, 320–340, and 347–367; these read IKDILGILMLLMVLMILVLFF, LGGVTALILSILILAMFPLIN, ITQAMYWIFIANLFILTWIGG, and FTMIGLISSILYFSIIVMFMF.

Belongs to the cytochrome b family. As to quaternary structure, the cytochrome bc1 complex contains 11 subunits: 3 respiratory subunits (MT-CYB, CYC1 and UQCRFS1), 2 core proteins (UQCRC1 and UQCRC2) and 6 low-molecular weight proteins (UQCRH/QCR6, UQCRB/QCR7, UQCRQ/QCR8, UQCR10/QCR9, UQCR11/QCR10 and a cleavage product of UQCRFS1). This cytochrome bc1 complex then forms a dimer. It depends on heme b as a cofactor.

The protein localises to the mitochondrion inner membrane. Component of the ubiquinol-cytochrome c reductase complex (complex III or cytochrome b-c1 complex) that is part of the mitochondrial respiratory chain. The b-c1 complex mediates electron transfer from ubiquinol to cytochrome c. Contributes to the generation of a proton gradient across the mitochondrial membrane that is then used for ATP synthesis. This is Cytochrome b (MT-CYB) from Calomys musculinus (Drylands vesper mouse).